We begin with the raw amino-acid sequence, 386 residues long: Centrosomal protein of 44 kDa (386 aa).

Residues 11–194 (RKLEQVLRSL…GVPEGTVTST (184 aa)) form a binds with microtubules and centrioles region. Residues 232 to 262 (ELTALQIALAECQEKLKKLTWIEKRLECLEA) adopt a coiled-coil conformation. Phosphoserine is present on serine 329. Positions 359–382 (SEETTMQKMERMKKMFEETAELLK) form a coiled coil.

Interacts with CROCC. Interacts with POC1B; the interaction is direct and recruits POC1B to centriolar microtubules. Binds to centriolar microtubules.

The protein localises to the cytoplasm. It localises to the cytoskeleton. Its subcellular location is the microtubule organizing center. The protein resides in the centrosome. It is found in the centriole. The protein localises to the spindle pole. It localises to the midbody. Functionally, centriole-enriched microtubule-binding protein involved in centriole biogenesis. In collaboration with CEP295 and POC1B, is required for the centriole-to-centrosome conversion by ensuring the formation of bona fide centriole wall. Functions as a linker component that maintains centrosome cohesion. Associates with CROCC and regulates its stability and localization to the centrosome. The chain is Centrosomal protein of 44 kDa (Cep44) from Rattus norvegicus (Rat).